A 271-amino-acid polypeptide reads, in one-letter code: Formamidopyrimidine-DNA glycosylase (271 aa).

The active-site Schiff-base intermediate with DNA is proline 2. Glutamate 3 (proton donor) is an active-site residue. Lysine 58 (proton donor; for beta-elimination activity) is an active-site residue. Residues histidine 90, arginine 108, and arginine 151 each coordinate DNA. The segment at glutamine 236–arginine 271 adopts an FPG-type; degenerate zinc-finger fold. Catalysis depends on arginine 261, which acts as the Proton donor; for delta-elimination activity.

It belongs to the FPG family. As to quaternary structure, monomer. Requires Zn(2+) as cofactor.

It catalyses the reaction Hydrolysis of DNA containing ring-opened 7-methylguanine residues, releasing 2,6-diamino-4-hydroxy-5-(N-methyl)formamidopyrimidine.. The catalysed reaction is 2'-deoxyribonucleotide-(2'-deoxyribose 5'-phosphate)-2'-deoxyribonucleotide-DNA = a 3'-end 2'-deoxyribonucleotide-(2,3-dehydro-2,3-deoxyribose 5'-phosphate)-DNA + a 5'-end 5'-phospho-2'-deoxyribonucleoside-DNA + H(+). Its function is as follows. Involved in base excision repair of DNA damaged by oxidation or by mutagenic agents. Acts as a DNA glycosylase that recognizes and removes damaged bases. Has a preference for oxidized purines, such as 7,8-dihydro-8-oxoguanine (8-oxoG). Has AP (apurinic/apyrimidinic) lyase activity and introduces nicks in the DNA strand. Cleaves the DNA backbone by beta-delta elimination to generate a single-strand break at the site of the removed base with both 3'- and 5'-phosphates. In Erythrobacter litoralis (strain HTCC2594), this protein is Formamidopyrimidine-DNA glycosylase.